Reading from the N-terminus, the 67-residue chain is DNA-directed RNA polymerase subunit omega (67 aa).

It belongs to the RNA polymerase subunit omega family. The RNAP catalytic core consists of 2 alpha, 1 beta, 1 beta' and 1 omega subunit. When a sigma factor is associated with the core the holoenzyme is formed, which can initiate transcription.

The enzyme catalyses RNA(n) + a ribonucleoside 5'-triphosphate = RNA(n+1) + diphosphate. In terms of biological role, promotes RNA polymerase assembly. Latches the N- and C-terminal regions of the beta' subunit thereby facilitating its interaction with the beta and alpha subunits. This Moorella thermoacetica (strain ATCC 39073 / JCM 9320) protein is DNA-directed RNA polymerase subunit omega.